We begin with the raw amino-acid sequence, 182 residues long: MFNAKHFFNLGLGFQWLQKRGIGSLKRPYNFPKPVPGPKHKDVLSLFEKKCRSVLDEQSERFKMFHRSQPNRVRPGAVLLVESYSKYPSKDSVNRFAGYLLRIRHRGPKSSILLRNVVMGVGVEYLLPIYSPQIKRIVVLKENGLSKRPRRAYLSYLRQPRFRLPPVESLVRKYIEQNQHKP.

Residues 1–21 (MFNAKHFFNLGLGFQWLQKRG) constitute a mitochondrion transit peptide.

This sequence belongs to the bacterial ribosomal protein bL19 family. In terms of assembly, component of the mitochondrial large ribosomal subunit (mt-LSU). Mature yeast 74S mitochondrial ribosomes consist of a small (37S) and a large (54S) subunit. The 37S small subunit contains a 15S ribosomal RNA (15S mt-rRNA) and at least 32 different proteins. The 54S large subunit contains a 21S rRNA (21S mt-rRNA) and at least 45 different proteins.

It is found in the mitochondrion. In terms of biological role, component of the mitochondrial ribosome (mitoribosome), a dedicated translation machinery responsible for the synthesis of mitochondrial genome-encoded proteins, including at least some of the essential transmembrane subunits of the mitochondrial respiratory chain. The mitoribosomes are attached to the mitochondrial inner membrane and translation products are cotranslationally integrated into the membrane. bL19m is essential for respiration. The polypeptide is Large ribosomal subunit protein bL19m (img1) (Schizosaccharomyces pombe (strain 972 / ATCC 24843) (Fission yeast)).